A 260-amino-acid polypeptide reads, in one-letter code: MTAETKRVGATGGMENSFGFTQIDEAQKQSMVDGVFHSVAENYDRMNDILSLGLHRIWKNSMITWLAPPAISGWKVIDVAGGTGDIAFRILNASRKKAHATVLDINHSMLNVGKKRAQINGLAPFIDFVEANAEQLPFSDQSFDAYTIAFGIRNVPHIDKALSEAFRVLKPGGRFLCLEFSNVEMPLLDKLYDLWSFHAIPKLGQLIAGNSDAYRYLVESIRMFPKQDDFACMINRAGFSRVSYRNFTGAIAALHSGWKI.

Residues threonine 83, aspartate 104, and 132–133 (NA) each bind S-adenosyl-L-methionine.

The protein belongs to the class I-like SAM-binding methyltransferase superfamily. MenG/UbiE family.

The catalysed reaction is a 2-demethylmenaquinol + S-adenosyl-L-methionine = a menaquinol + S-adenosyl-L-homocysteine + H(+). The enzyme catalyses a 2-methoxy-6-(all-trans-polyprenyl)benzene-1,4-diol + S-adenosyl-L-methionine = a 5-methoxy-2-methyl-3-(all-trans-polyprenyl)benzene-1,4-diol + S-adenosyl-L-homocysteine + H(+). It functions in the pathway quinol/quinone metabolism; menaquinone biosynthesis; menaquinol from 1,4-dihydroxy-2-naphthoate: step 2/2. Its pathway is cofactor biosynthesis; ubiquinone biosynthesis. Methyltransferase required for the conversion of demethylmenaquinol (DMKH2) to menaquinol (MKH2) and the conversion of 2-polyprenyl-6-methoxy-1,4-benzoquinol (DDMQH2) to 2-polyprenyl-3-methyl-6-methoxy-1,4-benzoquinol (DMQH2). This chain is Ubiquinone/menaquinone biosynthesis C-methyltransferase UbiE, found in Bartonella bacilliformis (strain ATCC 35685 / KC583 / Herrer 020/F12,63).